A 201-amino-acid chain; its full sequence is Protease (201 aa).

Residues histidine 56, aspartate 73, and cysteine 121 contribute to the active site.

It belongs to the peptidase C5 family. As to quaternary structure, interacts with protease cofactor pVI-C; this interaction is necessary for protease activation.

It localises to the virion. The protein resides in the host nucleus. It catalyses the reaction Cleaves proteins of the adenovirus and its host cell at two consensus sites: -Yaa-Xaa-Gly-Gly-|-Xaa- and -Yaa-Xaa-Gly-Xaa-|-Gly- (in which Yaa is Met, Ile or Leu, and Xaa is any amino acid).. Requires DNA and protease cofactor for maximal activation. Inside nascent virions, becomes partially activated by binding to the viral DNA, allowing it to cleave the cofactor that binds to the protease and fully activates it. Actin, like the viral protease cofactor, seems to act as a cofactor in the cleavage of cytokeratin 18 and of actin itself. In terms of biological role, cleaves viral precursor proteins (pTP, pIIIa, pVI, pVII, pVIII, and pX) inside newly assembled particles giving rise to mature virions. Protease complexed to its cofactor slides along the viral DNA to specifically locate and cleave the viral precursors. Mature virions have a weakened organization compared to the unmature virions, thereby facilitating subsequent uncoating. Without maturation, the particle lacks infectivity and is unable to uncoat. Late in adenovirus infection, in the cytoplasm, may participate in the cytoskeleton destruction. Cleaves host cell cytoskeletal keratins K7 and K18. The polypeptide is Protease (Homo sapiens (Human)).